A 720-amino-acid polypeptide reads, in one-letter code: Fatty acid CoA ligase Acsl3 (720 aa).

Residues 21–41 traverse the membrane as a helical; Signal-anchor for type III membrane protein segment; it reads ILLYFIHFIISLYTILTYIPF. Over 42 to 720 the chain is Cytoplasmic; it reads YFLCESKQEK…ADIERMYGRK (679 aa). Phosphoserine is present on Ser-683.

The protein belongs to the ATP-dependent AMP-binding enzyme family. The cofactor is Mg(2+). As to expression, predominantly expressed in the brain, and to a much lesser extent, in lung, adrenal gland, kidney, small intestine, and adipose tissue but not detected in heart or liver.

The protein localises to the mitochondrion outer membrane. It is found in the peroxisome membrane. It localises to the microsome membrane. The protein resides in the endoplasmic reticulum membrane. The catalysed reaction is a long-chain fatty acid + ATP + CoA = a long-chain fatty acyl-CoA + AMP + diphosphate. It carries out the reaction (5Z,8Z,11Z,14Z)-eicosatetraenoate + ATP + CoA = (5Z,8Z,11Z,14Z)-eicosatetraenoyl-CoA + AMP + diphosphate. It catalyses the reaction a medium-chain fatty acid + ATP + CoA = a medium-chain fatty acyl-CoA + AMP + diphosphate. The enzyme catalyses 15-hydroxy-(5Z,8Z,11Z,13E)-eicosatetraenoate + ATP + CoA = 15-hydroxy-(5Z,8Z,11Z,13E)-eicosatetraenoyl-CoA + AMP + diphosphate. The catalysed reaction is 12-hydroxy-(5Z,8Z,10E,14Z)-eicosatetraenoate + ATP + CoA = 12-hydroxy-(5Z,8Z,10E,14Z)-eicosatetraenoyl-CoA + AMP + diphosphate. It carries out the reaction 5-hydroxy-(6E,8Z,11Z,14Z)-eicosatetraenoate + ATP + CoA = 5-hydroxy-(6E,8Z,11Z,14Z)-eicosatetraenoyl-CoA + AMP + diphosphate. It catalyses the reaction 14,15-epoxy-(5Z,8Z,11Z)-eicosatrienoate + ATP + CoA = 14,15-epoxy-(5Z,8Z,11Z)-eicosatrienoyl-CoA + AMP + diphosphate. The enzyme catalyses 11,12-epoxy-(5Z,8Z,14Z)-eicosatrienoate + ATP + CoA = 11,12-epoxy-(5Z,8Z,14Z)-eicosatrienoyl-CoA + AMP + diphosphate. The catalysed reaction is (E)-hexadec-2-enoate + ATP + CoA = (2E)-hexadecenoyl-CoA + AMP + diphosphate. It carries out the reaction hexadecanoate + ATP + CoA = hexadecanoyl-CoA + AMP + diphosphate. It catalyses the reaction tetradecanoate + ATP + CoA = tetradecanoyl-CoA + AMP + diphosphate. The enzyme catalyses dodecanoate + ATP + CoA = dodecanoyl-CoA + AMP + diphosphate. The catalysed reaction is octadecanoate + ATP + CoA = octadecanoyl-CoA + AMP + diphosphate. It carries out the reaction eicosanoate + ATP + CoA = eicosanoyl-CoA + AMP + diphosphate. It catalyses the reaction (9Z)-octadecenoate + ATP + CoA = (9Z)-octadecenoyl-CoA + AMP + diphosphate. The enzyme catalyses (9Z)-hexadecenoate + ATP + CoA = (9Z)-hexadecenoyl-CoA + AMP + diphosphate. The catalysed reaction is (9Z,12Z)-octadecadienoate + ATP + CoA = (9Z,12Z)-octadecadienoyl-CoA + AMP + diphosphate. It carries out the reaction (9Z,12Z,15Z)-octadecatrienoate + ATP + CoA = (9Z,12Z,15Z)-octadecatrienoyl-CoA + AMP + diphosphate. It catalyses the reaction (4Z,7Z,10Z,13Z,16Z,19Z)-docosahexaenoate + ATP + CoA = (4Z,7Z,10Z,13Z,16Z,19Z)-docosahexaenoyl-CoA + AMP + diphosphate. The enzyme catalyses (5Z,8Z,11Z,14Z,17Z)-eicosapentaenoate + ATP + CoA = (5Z,8Z,11Z,14Z,17Z)-eicosapentaenoyl-CoA + AMP + diphosphate. The catalysed reaction is a fatty acid + ATP + CoA = a fatty acyl-CoA + AMP + diphosphate. Catalyzes the conversion of long-chain fatty acids to their active form acyl-CoA for both synthesis of cellular lipids, and degradation via beta-oxidation. ACSL3 is required for the incorporation of fatty acids into phosphatidylcholine, the major phospholipid located on the surface of VLDL (very low density lipoproteins). Has mainly an anabolic role in energy metabolism. Mediates hepatic lipogenesis. Preferentially uses myristate, laurate, arachidonate and eicosapentaenoate as substrates. Both isoforms exhibit the same level of activity. The sequence is that of Fatty acid CoA ligase Acsl3 from Rattus norvegicus (Rat).